A 324-amino-acid polypeptide reads, in one-letter code: Formimidoylglutamase (324 aa).

Residues His124, Asp153, His155, Asp157, Asp245, and Asp247 each contribute to the Mn(2+) site.

It belongs to the arginase family. It depends on Mn(2+) as a cofactor.

The enzyme catalyses N-formimidoyl-L-glutamate + H2O = formamide + L-glutamate. It functions in the pathway amino-acid degradation; L-histidine degradation into L-glutamate; L-glutamate from N-formimidoyl-L-glutamate (hydrolase route): step 1/1. Functionally, catalyzes the conversion of N-formimidoyl-L-glutamate to L-glutamate and formamide. The chain is Formimidoylglutamase from Hahella chejuensis (strain KCTC 2396).